The primary structure comprises 190 residues: GTP cyclohydrolase 1 (190 aa).

Cysteine 75, histidine 78, and cysteine 146 together coordinate Zn(2+).

This sequence belongs to the GTP cyclohydrolase I family. As to quaternary structure, toroid-shaped homodecamer, composed of two pentamers of five dimers.

The catalysed reaction is GTP + H2O = 7,8-dihydroneopterin 3'-triphosphate + formate + H(+). It functions in the pathway cofactor biosynthesis; 7,8-dihydroneopterin triphosphate biosynthesis; 7,8-dihydroneopterin triphosphate from GTP: step 1/1. This Campylobacter jejuni subsp. jejuni serotype O:23/36 (strain 81-176) protein is GTP cyclohydrolase 1.